Reading from the N-terminus, the 800-residue chain is Endonuclease MutS2 (800 aa).

336 to 343 (GPNTGGKT) lines the ATP pocket. Residues 725–800 (LDLRGVRYEA…GDGATIVELK (76 aa)) enclose the Smr domain.

The protein belongs to the DNA mismatch repair MutS family. MutS2 subfamily. Homodimer. Binds to stalled ribosomes, contacting rRNA.

Functionally, endonuclease that is involved in the suppression of homologous recombination and thus may have a key role in the control of bacterial genetic diversity. In terms of biological role, acts as a ribosome collision sensor, splitting the ribosome into its 2 subunits. Detects stalled/collided 70S ribosomes which it binds and splits by an ATP-hydrolysis driven conformational change. Acts upstream of the ribosome quality control system (RQC), a ribosome-associated complex that mediates the extraction of incompletely synthesized nascent chains from stalled ribosomes and their subsequent degradation. Probably generates substrates for RQC. The protein is Endonuclease MutS2 of Leuconostoc mesenteroides subsp. mesenteroides (strain ATCC 8293 / DSM 20343 / BCRC 11652 / CCM 1803 / JCM 6124 / NCDO 523 / NBRC 100496 / NCIMB 8023 / NCTC 12954 / NRRL B-1118 / 37Y).